The sequence spans 494 residues: MQKKYVVALDQGTTSSRAIVFDHDANIVSVSQREFTQLYPNPGWVEHDPMEIWASQSSVLIESLARAGIHSDEVAAIGITNQRETTIIWEKATGKPVYNAIVWQCRRSSEICEQLKAQGLEDYVRENTGLLLDPYFSGTKIKWILDNVPDARAKAKRGELLFGTVDTWLLWKLTEGKVHVTDPTNAARTLLFNIHSLSWDTTLLEALDIPAAMLPEVRPSCSVYGTTRIAGEGSEIPLAGIAGDQQAALFGQLCVEPGMAKNTYGTGCFLLMNTGNKAVRSSHGLLTTVAVGAQGEVNYALEGSVFMGGATIQWLRDELGLIRDASDTEYFASKVADTNGVYLVPAFVGLGAPYWDPNARGALFGLTRGANRNHIIRAALESIAYQSKDLLDAMIKDSGERLKSLKVDGGAVANDFLMQFQADITDVEVLRPSVCETTALGAAFLAGLAVGFWTSVTELEYKACIDKHFKPNIDASQRERLYVGWQDAVVRTRS.

Thr13 serves as a coordination point for ADP. Positions 13, 14, and 15 each coordinate ATP. Thr13 is a binding site for sn-glycerol 3-phosphate. Residue Arg17 coordinates ADP. Arg83, Glu84, Tyr135, and Asp244 together coordinate sn-glycerol 3-phosphate. Glycerol contacts are provided by Arg83, Glu84, Tyr135, Asp244, and Gln245. ADP is bound by residues Thr266 and Gly309. ATP contacts are provided by Thr266, Gly309, Gln313, and Gly410. Residues Gly410 and Asn414 each contribute to the ADP site.

Belongs to the FGGY kinase family.

The catalysed reaction is glycerol + ATP = sn-glycerol 3-phosphate + ADP + H(+). It participates in polyol metabolism; glycerol degradation via glycerol kinase pathway; sn-glycerol 3-phosphate from glycerol: step 1/1. Its activity is regulated as follows. Inhibited by fructose 1,6-bisphosphate (FBP). In terms of biological role, key enzyme in the regulation of glycerol uptake and metabolism. Catalyzes the phosphorylation of glycerol to yield sn-glycerol 3-phosphate. In Shewanella sp. (strain MR-4), this protein is Glycerol kinase.